Here is a 559-residue protein sequence, read N- to C-terminus: Nuclear envelope integral membrane protein (559 aa).

An N-terminal signal peptide occupies residues 1-15; that stretch reads MRLLTLALLVAGSLA. N-linked (GlcNAc...) asparagine glycosylation is found at Asn67, Asn81, and Asn114. The next 5 helical transmembrane spans lie at 164-184, 192-212, 218-238, 267-287, and 290-310; these read YTSGCSFGLLASLLLVAFIVW, IGVPILIGGWSVSLYMLHFAW, IMIEYQKYVIGYFATVLLISM, LIYFSVQMVEVSTGTIGALII, and ICRGFLFAGIRWYFVGLKAVW. Asn408 and Asn465 each carry an N-linked (GlcNAc...) asparagine glycan. Disordered stretches follow at residues 475–494 and 510–559; these read RRDSTPRHGNFQSEHRPRMP and KNGR…DADE. A compositionally biased stretch (polar residues) spans 517–526; sequence PSSSTASGMT. The span at 530-539 shows a compositional bias: basic and acidic residues; sequence YMRKARRIDA.

The protein belongs to the NEMP family.

It localises to the nucleus inner membrane. Contributes to nuclear envelope stiffness in germ cells. Required for fertility. The sequence is that of Nuclear envelope integral membrane protein from Caenorhabditis elegans.